Reading from the N-terminus, the 444-residue chain is Trigger factor (444 aa).

A PPIase FKBP-type domain is found at 161–246 (GDRVVIDFKG…VQKVEGQKLP (86 aa)).

It belongs to the FKBP-type PPIase family. Tig subfamily.

Its subcellular location is the cytoplasm. The enzyme catalyses [protein]-peptidylproline (omega=180) = [protein]-peptidylproline (omega=0). In terms of biological role, involved in protein export. Acts as a chaperone by maintaining the newly synthesized protein in an open conformation. Functions as a peptidyl-prolyl cis-trans isomerase. This chain is Trigger factor, found in Saccharophagus degradans (strain 2-40 / ATCC 43961 / DSM 17024).